We begin with the raw amino-acid sequence, 355 residues long: UDP-3-O-acylglucosamine N-acyltransferase (355 aa).

The active-site Proton acceptor is the His258.

This sequence belongs to the transferase hexapeptide repeat family. LpxD subfamily. As to quaternary structure, homotrimer.

It catalyses the reaction a UDP-3-O-[(3R)-3-hydroxyacyl]-alpha-D-glucosamine + a (3R)-hydroxyacyl-[ACP] = a UDP-2-N,3-O-bis[(3R)-3-hydroxyacyl]-alpha-D-glucosamine + holo-[ACP] + H(+). It functions in the pathway bacterial outer membrane biogenesis; LPS lipid A biosynthesis. Catalyzes the N-acylation of UDP-3-O-acylglucosamine using 3-hydroxyacyl-ACP as the acyl donor. Is involved in the biosynthesis of lipid A, a phosphorylated glycolipid that anchors the lipopolysaccharide to the outer membrane of the cell. This Bradyrhizobium sp. (strain ORS 278) protein is UDP-3-O-acylglucosamine N-acyltransferase.